The following is a 207-amino-acid chain: LexA repressor (207 aa).

Residues 28-48 (VREIGEAVGLASSSTVHGHLS) constitute a DNA-binding region (H-T-H motif). Residues S130 and K168 each act as for autocatalytic cleavage activity in the active site.

Belongs to the peptidase S24 family. In terms of assembly, homodimer.

The catalysed reaction is Hydrolysis of Ala-|-Gly bond in repressor LexA.. In terms of biological role, represses a number of genes involved in the response to DNA damage (SOS response), including recA and lexA. In the presence of single-stranded DNA, RecA interacts with LexA causing an autocatalytic cleavage which disrupts the DNA-binding part of LexA, leading to derepression of the SOS regulon and eventually DNA repair. This chain is LexA repressor, found in Staphylococcus aureus (strain Mu3 / ATCC 700698).